We begin with the raw amino-acid sequence, 503 residues long: Probable cytosol aminopeptidase (503 aa).

Residues K270 and D275 each coordinate Mn(2+). The active site involves K282. Mn(2+) is bound by residues D293, D352, and E354. R356 is an active-site residue.

This sequence belongs to the peptidase M17 family. Mn(2+) serves as cofactor.

It is found in the cytoplasm. The catalysed reaction is Release of an N-terminal amino acid, Xaa-|-Yaa-, in which Xaa is preferably Leu, but may be other amino acids including Pro although not Arg or Lys, and Yaa may be Pro. Amino acid amides and methyl esters are also readily hydrolyzed, but rates on arylamides are exceedingly low.. It catalyses the reaction Release of an N-terminal amino acid, preferentially leucine, but not glutamic or aspartic acids.. Its function is as follows. Presumably involved in the processing and regular turnover of intracellular proteins. Catalyzes the removal of unsubstituted N-terminal amino acids from various peptides. This is Probable cytosol aminopeptidase from Serratia proteamaculans (strain 568).